Here is a 137-residue protein sequence, read N- to C-terminus: ATP synthase epsilon chain (137 aa).

The protein belongs to the ATPase epsilon chain family. F-type ATPases have 2 components, CF(1) - the catalytic core - and CF(0) - the membrane proton channel. CF(1) has five subunits: alpha(3), beta(3), gamma(1), delta(1), epsilon(1). CF(0) has three main subunits: a, b and c.

It is found in the cellular thylakoid membrane. Functionally, produces ATP from ADP in the presence of a proton gradient across the membrane. In Nostoc punctiforme (strain ATCC 29133 / PCC 73102), this protein is ATP synthase epsilon chain.